A 237-amino-acid polypeptide reads, in one-letter code: Insulin-like growth factor-binding protein 6 (237 aa).

The N-terminal stretch at 1–25 (MTPHRLLPPLLLTLLLAARPGGALA) is a signal peptide. Positions 26-105 (RCPGCGQGVS…LQGRGRCGRA (80 aa)) constitute an IGFBP N-terminal domain. 5 disulfides stabilise this stretch: cysteine 27-cysteine 30, cysteine 38-cysteine 42, cysteine 55-cysteine 61, cysteine 69-cysteine 82, and cysteine 76-cysteine 102. Residues 101–158 (RCGRARTPSGENPKESKPQAGTARSQDVNRRDQQRNSGTSTTPSRSNSGGVQDTEMGP) are disordered. The span at 135-151 (RNSGTSTTPSRSNSGGV) shows a compositional bias: polar residues. Positions 156–231 (MGPCRKHLDS…SEGGDGSSLC (76 aa)) constitute a Thyroglobulin type-1 domain. 3 disulfides stabilise this stretch: cysteine 159/cysteine 186, cysteine 197/cysteine 208, and cysteine 210/cysteine 231. The interval 215-237 (GQPLPGSSEGGDGSSLCPTGSSG) is disordered.

As to quaternary structure, interacts (via C-terminal domain) with PHB2. O-glycosylated.

Its subcellular location is the secreted. In terms of biological role, IGF-binding proteins prolong the half-life of the IGFs and have been shown to either inhibit or stimulate the growth promoting effects of the IGFs on cell culture. They alter the interaction of IGFs with their cell surface receptors. Activates the MAPK signaling pathway and induces cell migration. The sequence is that of Insulin-like growth factor-binding protein 6 (IGFBP6) from Bos taurus (Bovine).